We begin with the raw amino-acid sequence, 255 residues long: MVSWMISRAVVLVFGMLYPAYYSYKAVKTKNVKEYVRWMMYWIVFALYTVIETVADQTVAWFPLYYELKIAFVIWLLSPYTKGASLIYRKFLHPLLSSKEREIDDYIVQAKERGYETMVNFGRQGLNLAATAAVTAAVKSQGAITERLRSFSMHDLTTIQGDEPVGQRPYQPLPEAKKKSKPAPSESAGYGIPLKDGDEKTDEEAEGPYSDNEMLTHKGLRRSQSMKSVKTTKGRKEVRYGSLKYKVKKRPQVYF.

The next 3 membrane-spanning stretches (helical) occupy residues M1–Y21, Y35–A55, and V59–P79. Positions T158 to S242 are disordered. T201 is modified (phosphothreonine). S210 is subject to Phosphoserine. Over residues R222 to T231 the composition is skewed to polar residues.

The protein belongs to the DP1 family. In terms of tissue distribution, expressed in circumvallate papillae.

Its subcellular location is the endoplasmic reticulum membrane. Microtubule-binding protein required to ensure proper cell division and nuclear envelope reassembly by sequestering the endoplasmic reticulum away from chromosomes during mitosis. Probably acts by clearing the endoplasmic reticulum membrane from metaphase chromosomes. The chain is Receptor expression-enhancing protein 3 (REEP3) from Homo sapiens (Human).